Reading from the N-terminus, the 1868-residue chain is Dedicator of cytokinesis protein 5 (1868 aa).

One can recognise an SH3 domain in the interval 8–69 (KRQKYGVAIY…PETYIHLKEA (62 aa)). The residue at position 365 (Ser-365) is a Phosphoserine. The C2 DOCK-type domain maps to 443–627 (RNDIYVTLIH…DSFQIATLIC (185 aa)). At Lys-818 the chain carries N6-acetyllysine. The region spanning 1231–1642 (YKDKKREDIY…VEKLYGVITL (412 aa)) is the DOCKER domain. A compositionally biased stretch (low complexity) spans 1681–1692 (STSSNSSDNASS). Disordered regions lie at residues 1681 to 1730 (STSS…RISK) and 1742 to 1868 (QVIA…PGSQ). Over residues 1704–1728 (LFERRASSGARVEDLPPKEDSENRI) the composition is skewed to basic and acidic residues. Phosphoserine occurs at positions 1755, 1765, 1771, 1784, and 1788. The residue at position 1793 (Thr-1793) is a Phosphothreonine. A compositionally biased stretch (polar residues) spans 1796–1810 (ATRTLSSPSLQTDGL). Phosphoserine occurs at positions 1832 and 1867.

Belongs to the DOCK family. Interacts with CRK and CRKL. Interacts (via N-terminus) with tensin TNS3 (via N-terminus); the interaction increases DOCK5 guanine nucleotide exchange activity towards Rac. Interacts with ELMO1. As to expression, highly expressed in lens, where it predominantly localizes to anterior epithelial cells, and is weakly expressed in lens fiber (at protein level). Expressed in brain, eye, lung, spleen and kidney, but not in thymus or peripheral blood leukocytes.

Its subcellular location is the cytoplasm. The protein resides in the cell membrane. It localises to the cell projection. It is found in the podosome. Guanine nucleotide exchange factor (GEF) for Rho and Rac. GEF proteins activate small GTPases by exchanging bound GDP for free GTP. Along with DOCK1, mediates CRK/CRKL regulation of epithelial and endothelial cell spreading and migration on type IV collagen. The polypeptide is Dedicator of cytokinesis protein 5 (Mus musculus (Mouse)).